A 165-amino-acid chain; its full sequence is GTP-dependent dephospho-CoA kinase (165 aa).

Asp-44, Val-45, Asp-63, Lys-65, Glu-115, and Asp-138 together coordinate GTP.

It belongs to the GTP-dependent DPCK family.

It catalyses the reaction 3'-dephospho-CoA + GTP = GDP + CoA + H(+). It participates in cofactor biosynthesis; coenzyme A biosynthesis. Its function is as follows. Catalyzes the GTP-dependent phosphorylation of the 3'-hydroxyl group of dephosphocoenzyme A to form coenzyme A (CoA). This is GTP-dependent dephospho-CoA kinase from Picrophilus torridus (strain ATCC 700027 / DSM 9790 / JCM 10055 / NBRC 100828 / KAW 2/3).